The sequence spans 260 residues: Hydroxyethylthiazole kinase 1 (260 aa).

Met-39 lines the substrate pocket. Residues Arg-115 and Thr-160 each coordinate ATP. A substrate-binding site is contributed by Gly-187.

The protein belongs to the Thz kinase family. Mg(2+) is required as a cofactor.

The enzyme catalyses 5-(2-hydroxyethyl)-4-methylthiazole + ATP = 4-methyl-5-(2-phosphooxyethyl)-thiazole + ADP + H(+). Its pathway is cofactor biosynthesis; thiamine diphosphate biosynthesis; 4-methyl-5-(2-phosphoethyl)-thiazole from 5-(2-hydroxyethyl)-4-methylthiazole: step 1/1. Functionally, catalyzes the phosphorylation of the hydroxyl group of 4-methyl-5-beta-hydroxyethylthiazole (THZ). The protein is Hydroxyethylthiazole kinase 1 of Streptococcus pneumoniae (strain JJA).